Reading from the N-terminus, the 37-residue chain is ARSRSRRSYGRGRRRGGRRRRRRRRRRRGGRRGRRSR.

A disordered region spans residues 1–37; it reads ARSRSRRSYGRGRRRGGRRRRRRRRRRRGGRRGRRSR.

In terms of tissue distribution, testis.

It is found in the nucleus. Its subcellular location is the chromosome. In terms of biological role, protamines substitute for histones in the chromatin of sperm during the haploid phase of spermatogenesis. They compact sperm DNA into a highly condensed, stable and inactive complex. The chain is Protamine Z3 from Scyliorhinus canicula (Small-spotted catshark).